We begin with the raw amino-acid sequence, 93 residues long: DNA-directed RNA polymerase subunit omega (93 aa).

The protein belongs to the RNA polymerase subunit omega family. The RNAP catalytic core consists of 2 alpha, 1 beta, 1 beta' and 1 omega subunit. When a sigma factor is associated with the core the holoenzyme is formed, which can initiate transcription.

It catalyses the reaction RNA(n) + a ribonucleoside 5'-triphosphate = RNA(n+1) + diphosphate. Functionally, promotes RNA polymerase assembly. Latches the N- and C-terminal regions of the beta' subunit thereby facilitating its interaction with the beta and alpha subunits. The protein is DNA-directed RNA polymerase subunit omega of Actinobacillus pleuropneumoniae serotype 7 (strain AP76).